A 427-amino-acid chain; its full sequence is MSAIVDIIGREVIDSRGNPTVECDVLLESGVMGRAAVPSGASTGSREAIELRDGDKSRYFGKGVLKACEHINTEISEAIMGLDANEQAFLDRTLIDLDGTENKARLGANATLAVSMAVAKAAAEESGLPLYRYFGGSGAMQMPVPMMNVINGGAHANNNLDLQEFMIIPVGAPSFREAIRYGAEVFHTLKKIINDKGLPTSVGDEGGFAPSVENHEAAIKLILQAIEQAGYEPGTQIALGLDCAASEFYKDGKYHLAGEGMTLSSADFTNLLGTWCDKYPIISIEDGMAENDWDGWATLTNALGKKVQLVGDDLFVTNTKILREGIQKNIANSILIKINQIGTLTETFAAIEMAKRAGYTAVISHRSGETEDSTIADIAVGTNSLQIKTGSMSRSDRMAKYNQLLRIEEDLGDIASYPGRGAFYNLK.

Gln-163 contributes to the (2R)-2-phosphoglycerate binding site. Catalysis depends on Glu-205, which acts as the Proton donor. 3 residues coordinate Mg(2+): Asp-242, Glu-285, and Asp-312. Residues Lys-337, Arg-366, Ser-367, and Lys-388 each contribute to the (2R)-2-phosphoglycerate site. Catalysis depends on Lys-337, which acts as the Proton acceptor.

This sequence belongs to the enolase family. The cofactor is Mg(2+).

It localises to the cytoplasm. It is found in the secreted. The protein resides in the cell surface. The catalysed reaction is (2R)-2-phosphoglycerate = phosphoenolpyruvate + H2O. It functions in the pathway carbohydrate degradation; glycolysis; pyruvate from D-glyceraldehyde 3-phosphate: step 4/5. Functionally, catalyzes the reversible conversion of 2-phosphoglycerate (2-PG) into phosphoenolpyruvate (PEP). It is essential for the degradation of carbohydrates via glycolysis. The sequence is that of Enolase from Janthinobacterium sp. (strain Marseille) (Minibacterium massiliensis).